The sequence spans 305 residues: Elongation factor Ts (305 aa).

The involved in Mg(2+) ion dislocation from EF-Tu stretch occupies residues 79–82 (TDFV).

This sequence belongs to the EF-Ts family.

It is found in the cytoplasm. Associates with the EF-Tu.GDP complex and induces the exchange of GDP to GTP. It remains bound to the aminoacyl-tRNA.EF-Tu.GTP complex up to the GTP hydrolysis stage on the ribosome. The chain is Elongation factor Ts from Brucella anthropi (strain ATCC 49188 / DSM 6882 / CCUG 24695 / JCM 21032 / LMG 3331 / NBRC 15819 / NCTC 12168 / Alc 37) (Ochrobactrum anthropi).